An 81-amino-acid chain; its full sequence is Photosystem I iron-sulfur center (81 aa).

2 consecutive 4Fe-4S ferredoxin-type domains span residues 2-31 (SHSV…MIPW) and 39-68 (IASA…VRVY). C11, C14, C17, C21, C48, C51, C54, and C58 together coordinate [4Fe-4S] cluster.

As to quaternary structure, the eukaryotic PSI reaction center is composed of at least 11 subunits. [4Fe-4S] cluster serves as cofactor.

Its subcellular location is the plastid. The protein resides in the chloroplast thylakoid membrane. The catalysed reaction is reduced [plastocyanin] + hnu + oxidized [2Fe-2S]-[ferredoxin] = oxidized [plastocyanin] + reduced [2Fe-2S]-[ferredoxin]. Its function is as follows. Apoprotein for the two 4Fe-4S centers FA and FB of photosystem I (PSI); essential for photochemical activity. FB is the terminal electron acceptor of PSI, donating electrons to ferredoxin. The C-terminus interacts with PsaA/B/D and helps assemble the protein into the PSI complex. Required for binding of PsaD and PsaE to PSI. PSI is a plastocyanin-ferredoxin oxidoreductase, converting photonic excitation into a charge separation, which transfers an electron from the donor P700 chlorophyll pair to the spectroscopically characterized acceptors A0, A1, FX, FA and FB in turn. The polypeptide is Photosystem I iron-sulfur center (Sorghum bicolor (Sorghum)).